Consider the following 273-residue polypeptide: Undecaprenyl-diphosphatase (273 aa).

Helical transmembrane passes span alanine 45–tryptophan 65, leucine 90–histidine 110, leucine 116–alanine 136, tyrosine 154–serine 173, tyrosine 190–leucine 210, alanine 222–isoleucine 242, and isoleucine 252–phenylalanine 272.

This sequence belongs to the UppP family.

Its subcellular location is the cell inner membrane. The enzyme catalyses di-trans,octa-cis-undecaprenyl diphosphate + H2O = di-trans,octa-cis-undecaprenyl phosphate + phosphate + H(+). Catalyzes the dephosphorylation of undecaprenyl diphosphate (UPP). Confers resistance to bacitracin. The sequence is that of Undecaprenyl-diphosphatase from Enterobacter sp. (strain 638).